The following is a 381-amino-acid chain: Probable tRNA sulfurtransferase (381 aa).

One can recognise a THUMP domain in the interval Asp-68–Lys-176. ATP is bound by residues Leu-194–Ile-195, Lys-276, Gly-298, and Gln-307.

This sequence belongs to the ThiI family.

It is found in the cytoplasm. It carries out the reaction [ThiI sulfur-carrier protein]-S-sulfanyl-L-cysteine + a uridine in tRNA + 2 reduced [2Fe-2S]-[ferredoxin] + ATP + H(+) = [ThiI sulfur-carrier protein]-L-cysteine + a 4-thiouridine in tRNA + 2 oxidized [2Fe-2S]-[ferredoxin] + AMP + diphosphate. The enzyme catalyses [ThiS sulfur-carrier protein]-C-terminal Gly-Gly-AMP + S-sulfanyl-L-cysteinyl-[cysteine desulfurase] + AH2 = [ThiS sulfur-carrier protein]-C-terminal-Gly-aminoethanethioate + L-cysteinyl-[cysteine desulfurase] + A + AMP + 2 H(+). It functions in the pathway cofactor biosynthesis; thiamine diphosphate biosynthesis. In terms of biological role, catalyzes the ATP-dependent transfer of a sulfur to tRNA to produce 4-thiouridine in position 8 of tRNAs, which functions as a near-UV photosensor. Also catalyzes the transfer of sulfur to the sulfur carrier protein ThiS, forming ThiS-thiocarboxylate. This is a step in the synthesis of thiazole, in the thiamine biosynthesis pathway. The sulfur is donated as persulfide by IscS. This chain is Probable tRNA sulfurtransferase, found in Methanocaldococcus jannaschii (strain ATCC 43067 / DSM 2661 / JAL-1 / JCM 10045 / NBRC 100440) (Methanococcus jannaschii).